A 349-amino-acid polypeptide reads, in one-letter code: Peroxidase C3 (349 aa).

Positions 1–29 (MGFSPLISCSAMGALILSCLLLQASNSNA) are cleaved as a signal peptide. 4 cysteine pairs are disulfide-bonded: C40–C120, C73–C78, C126–C329, and C206–C238. Residue H71 is the Proton acceptor of the active site. Ca(2+) contacts are provided by D72, V75, G77, D79, and S81. A glycan (N-linked (GlcNAc...) asparagine) is linked at N86. Position 168 (P168) interacts with substrate. H199 contributes to the heme b binding site. Position 200 (T200) interacts with Ca(2+). N217 and N243 each carry an N-linked (GlcNAc...) asparagine glycan. Ca(2+) contacts are provided by D251, T254, and D259.

The protein belongs to the peroxidase family. Classical plant (class III) peroxidase subfamily. Ca(2+) serves as cofactor. It depends on heme b as a cofactor.

The protein resides in the secreted. It localises to the vacuole. The enzyme catalyses 2 a phenolic donor + H2O2 = 2 a phenolic radical donor + 2 H2O. In terms of biological role, removal of H(2)O(2), oxidation of toxic reductants, biosynthesis and degradation of lignin, suberization, auxin catabolism, response to environmental stresses such as wounding, pathogen attack and oxidative stress. These functions might be dependent on each isozyme/isoform in each plant tissue. This is Peroxidase C3 (PRXC3) from Armoracia rusticana (Horseradish).